The following is a 252-amino-acid chain: 2-succinyl-6-hydroxy-2,4-cyclohexadiene-1-carboxylate synthase (252 aa).

It belongs to the AB hydrolase superfamily. MenH family. Monomer.

The enzyme catalyses 5-enolpyruvoyl-6-hydroxy-2-succinyl-cyclohex-3-ene-1-carboxylate = (1R,6R)-6-hydroxy-2-succinyl-cyclohexa-2,4-diene-1-carboxylate + pyruvate. It functions in the pathway quinol/quinone metabolism; 1,4-dihydroxy-2-naphthoate biosynthesis; 1,4-dihydroxy-2-naphthoate from chorismate: step 3/7. It participates in quinol/quinone metabolism; menaquinone biosynthesis. In terms of biological role, catalyzes a proton abstraction reaction that results in 2,5-elimination of pyruvate from 2-succinyl-5-enolpyruvyl-6-hydroxy-3-cyclohexene-1-carboxylate (SEPHCHC) and the formation of 2-succinyl-6-hydroxy-2,4-cyclohexadiene-1-carboxylate (SHCHC). In Escherichia coli O157:H7, this protein is 2-succinyl-6-hydroxy-2,4-cyclohexadiene-1-carboxylate synthase.